A 422-amino-acid polypeptide reads, in one-letter code: MLDLEVVPERSLGNEQWEFTLGMPLAQAVAILQKHCRIIRNVQVLYSEQSPLSHDLILNLTQDGITLLFDAFNQRLKVIEVCELTKVKLKYCGVHFNSQAIAPTIEQIDQSFGATHPGVYNSTEQLFHLNFRGLSFSFQLDSWTEAPKYEPNFAHGLASLQIPHGATVKRMYIYSGNSLQDTKAPVMPLSCFLGNVYAESVDVLRDGTGPSGLRLRLLAAGCGPGVLADAKMRVFERAVYFGDSCQDVLSMLGSPHKVFYKSEDKMKIHSPSPHKQVPSKCNDYFFNYFTLGVDILFDANTHKVKKFVLHTNYPGHYNFNIYHRCEFKIPLAIKKENAGGQTEICTTYSKWDSIQELLGHPVEKPVVLHRSSSPNNTNPFGSTFCFGLQRMIFEVMQNNHIASVTLYGPPRPGAHLRTAELP.

Belongs to the PHAF1 family. In terms of assembly, interacts with BCAS3; the interaction is requrired for the association with the phagophore.

The protein localises to the cytoplasm. It localises to the preautophagosomal structure. In terms of biological role, plays a regulatory role in autophagic activity. In complex with BCAS3, associates with the autophagosome formation site during both non-selective and selective autophagy. The polypeptide is Phagosome assembly factor 1 (Mus musculus (Mouse)).